A 914-amino-acid chain; its full sequence is Zinc finger protein 717 (914 aa).

Residues 22-93 (VSFEEVAVHF…EETPNLRLSA (72 aa)) form the KRAB domain. The C2H2-type 1; degenerate zinc-finger motif lies at 209–231 (FQCNEQGKTFNTEAMFFIHKRVH). Residues 266 to 277 (RKSDFTKHQQTH) form a C2H2-type 2; degenerate zinc finger. The C2H2-type 3; degenerate zinc finger occupies 283–305 (YECVECEKPSISKSDLMLQCKMP). C2H2-type zinc fingers lie at residues 311 to 333 (YACNWCEKLFSYKSSLIIHQRIH), 339 to 361 (YGCNECGKTFRRKSFLTLHERTH), 367 to 389 (YKCIECGKTFHCKSLLTLHHRTH), 395 to 417 (YQCSECGKTFSQKSYLTIHHRTH), 423 to 445 (YACDHCEEAFSHKSRLTVHQRTH), 451 to 473 (YECNECGKPFINKSNLRLHQRTH), 479 to 501 (YECNECGKTFHRKSFLTIHQWTH), 507 to 529 (YECNECGKTFRCKSFLTVHQRTH), 535 to 557 (YACNECGKTYSHKSYLTVHHRTH), 563 to 585 (YECNECGKSFHCKSFLTIHQRTH), 591 to 613 (YECNECEKTFINKLNLGIHKRTH), and 619 to 641 (YECNECGKTFRQKSNLSTHQGTH). Residues 649–669 (CNECGKTFHRKSFLTIHQRTH) form a C2H2-type 16; degenerate zinc finger. A C2H2-type 17; degenerate zinc finger spans residues 741–752 (QKSVLTVHHRTH). 5 consecutive C2H2-type zinc fingers follow at residues 758–780 (YECNECGKTFCHKSNLSTHQGTH), 786–808 (YECDECRKTFYDKTVLTIHQRTH), 814–836 (FECKECRKTFSQKSKLFVHHRTH), 842–864 (FRCNECRKTFSQKSGLSIHQRTH), and 870–892 (YECKECGKTFCQKSHLSRHQQTH).

This sequence belongs to the krueppel C2H2-type zinc-finger protein family.

Its subcellular location is the nucleus. In terms of biological role, may be involved in transcriptional regulation. In Homo sapiens (Human), this protein is Zinc finger protein 717.